The sequence spans 535 residues: Solute carrier family 22 member 7 (535 aa).

12 consecutive transmembrane segments (helical) span residues 21–41 (LVLM…PVFM), 144–164 (ITST…GYLS), 178–198 (VSSL…MFVV), 202–222 (LTGS…LEWL), 232–252 (VIST…GYLI), 257–277 (WLLL…WWVP), 344–364 (ISLC…GLTL), 375–395 (QTQL…YFLV), 402–422 (LTEA…LLVS), 429–449 (ITAL…TAYL), 464–484 (LGLT…AALL), and 489–509 (LLLP…TALL).

This sequence belongs to the major facilitator (TC 2.A.1) superfamily. Organic cation transporter (TC 2.A.1.19) family. Expressed in liver and kidney. Expressed at low levels in adipose tissue. Expressed in fetal liver. In kidney, expressed at the brush border of the proximal tubule S3 segment (S3) in the outer stripe and medullary rays. In kidney, expression is higher in female than male.

It localises to the basolateral cell membrane. The protein localises to the apical cell membrane. The protein resides in the cell membrane. It carries out the reaction orotate(out) + L-glutamate(in) = orotate(in) + L-glutamate(out). It catalyses the reaction 3',5'-cyclic GMP(in) = 3',5'-cyclic GMP(out). The enzyme catalyses GMP(in) = GMP(out). The catalysed reaction is 2'-deoxyguanosine(in) = 2'-deoxyguanosine(out). It carries out the reaction GDP(in) = GDP(out). It catalyses the reaction guanosine(in) = guanosine(out). The enzyme catalyses GTP(in) = GTP(out). The catalysed reaction is 3',5'-cyclic AMP(in) = 3',5'-cyclic AMP(out). It carries out the reaction creatinine(in) = creatinine(out). It catalyses the reaction prostaglandin E2(out) = prostaglandin E2(in). The enzyme catalyses 2-oxoglutarate(in) = 2-oxoglutarate(out). The catalysed reaction is glutarate(in) = glutarate(out). It carries out the reaction urate(out) = urate(in). It catalyses the reaction estrone 3-sulfate(out) = estrone 3-sulfate(in). Functions as a Na(+)-independent bidirectional multispecific transporter. Contributes to the renal and hepatic elimination of endogenous organic compounds from the systemic circulation into the urine and bile, respectively. Capable of transporting a wide range of purine and pyrimidine nucleobases, nucleosides, and nucleotides with cGMP, 2'deoxyguanosine and GMP being the preferred substrates. Functions as a pH- and chloride-independent cGMP bidirectional facilitative transporter that can regulate both intracellular and extracellular levels of cGMP and may be involved in cGMP signaling pathways. Mediates orotate/glutamate bidirectional exchange and most likely display a physiological role in hepatic release of glutamate into the blood. Involved in renal secretion and possible reabsorption of creatinine. Able to uptake prostaglandin E2 (PGE2) and may contribute to PGE2 renal excretion. Also transports alpha-ketoglutarate and urate. Apart from the orotate/glutamate exchange, the counterions for the uptake of other SLC22A7/OAT2 substrates remain to be identified. The sequence is that of Solute carrier family 22 member 7 from Rattus norvegicus (Rat).